Consider the following 121-residue polypeptide: Small ribosomal subunit protein uS13 (121 aa).

Residues 96–121 are disordered; it reads PVRGQNTKNNARTRKGKAVAIAGKKK. A compositionally biased stretch (basic residues) spans 106–121; the sequence is ARTRKGKAVAIAGKKK.

This sequence belongs to the universal ribosomal protein uS13 family. In terms of assembly, part of the 30S ribosomal subunit. Forms a loose heterodimer with protein S19. Forms two bridges to the 50S subunit in the 70S ribosome.

Its function is as follows. Located at the top of the head of the 30S subunit, it contacts several helices of the 16S rRNA. In the 70S ribosome it contacts the 23S rRNA (bridge B1a) and protein L5 of the 50S subunit (bridge B1b), connecting the 2 subunits; these bridges are implicated in subunit movement. Contacts the tRNAs in the A and P-sites. The chain is Small ribosomal subunit protein uS13 from Streptococcus pyogenes serotype M3 (strain SSI-1).